A 36-amino-acid chain; its full sequence is Peruvianin-1 (36 aa).

Belongs to the germin family. In terms of assembly, homohexamer, possibly consisting of a trimer of dimers. In terms of processing, glycosylated.

Its activity is regulated as follows. Inhibited by iodoacetamide and trans-epoxysuccinyl-L-leucylamido(4-guanidino)butane (E-64) but not by phenylmethylsulfonyl fluoride (PMSF), pepstatin-A, ethylenediamine tetra acetic acid (EDTA) or ethylene glycol tetraacetic acid (EGTA). Its function is as follows. Cysteine protease able to degrade azocasein and benzoyl-arginine-beta-naphtylamide (BANA) in vitro. In Thevetia peruviana (Yellow oleander), this protein is Peruvianin-1.